The sequence spans 316 residues: Na(+)-translocating NADH-quinone reductase subunit C (316 aa).

The chain crosses the membrane as a helical span at residues 13-33; it reads WYIILFIFVLSLIAGTLLSSV. The residue at position 280 (threonine 280) is an FMN phosphoryl threonine.

The protein belongs to the NqrC family. In terms of assembly, composed of six subunits; NqrA, NqrB, NqrC, NqrD, NqrE and NqrF. FMN is required as a cofactor.

The protein localises to the cell inner membrane. It carries out the reaction a ubiquinone + n Na(+)(in) + NADH + H(+) = a ubiquinol + n Na(+)(out) + NAD(+). In terms of biological role, NQR complex catalyzes the reduction of ubiquinone-1 to ubiquinol by two successive reactions, coupled with the transport of Na(+) ions from the cytoplasm to the periplasm. NqrA to NqrE are probably involved in the second step, the conversion of ubisemiquinone to ubiquinol. The protein is Na(+)-translocating NADH-quinone reductase subunit C of Chlamydia trachomatis serovar D (strain ATCC VR-885 / DSM 19411 / UW-3/Cx).